A 363-amino-acid chain; its full sequence is MSNNYHIAVLPGDGIGPEVMAQAYKILDAIRKRFNICITTSEYDVGGIAIDRHGCSLPAKTVAGCEQADAILFGSVGGPKWEHLPPAEQPERGALLPLRKHFKLFSNLRPARLYAGLEVFCPLRNDIAAKGFDILCVRELTGGIYFGQPKGREGQGKYERAFDTEVYHRFEIERIARIAFESARKRSNKVTSIDKANVLQSSVLWREVVTEIAKAYPDVEINHMYIDNATMQLIKDPSQFDVMLCSNIFGDILSDECAMITGSMGMLPSASLNEKGFGLYEPAGGSAPDIAGKGIANPIAQILSAALLLRYSLGHNDAANAIEQAVNYALEQGYRTTDLAGNGKAISTDEMGSTIARYIAEGV.

78–91 (GPKWEHLPPAEQPE) is a binding site for NAD(+). The substrate site is built by R99, R109, R138, and D227. D227, D251, and D255 together coordinate Mg(2+). An NAD(+)-binding site is contributed by 285–297 (GSAPDIAGKGIAN).

This sequence belongs to the isocitrate and isopropylmalate dehydrogenases family. LeuB type 1 subfamily. In terms of assembly, homodimer. Mg(2+) serves as cofactor. Requires Mn(2+) as cofactor.

The protein resides in the cytoplasm. It carries out the reaction (2R,3S)-3-isopropylmalate + NAD(+) = 4-methyl-2-oxopentanoate + CO2 + NADH. It participates in amino-acid biosynthesis; L-leucine biosynthesis; L-leucine from 3-methyl-2-oxobutanoate: step 3/4. Catalyzes the oxidation of 3-carboxy-2-hydroxy-4-methylpentanoate (3-isopropylmalate) to 3-carboxy-4-methyl-2-oxopentanoate. The product decarboxylates to 4-methyl-2 oxopentanoate. This chain is 3-isopropylmalate dehydrogenase, found in Photorhabdus laumondii subsp. laumondii (strain DSM 15139 / CIP 105565 / TT01) (Photorhabdus luminescens subsp. laumondii).